The sequence spans 265 residues: Type 1 encapsulin shell protein (265 aa).

This sequence belongs to the encapsulin family. Family 1 subfamily. As to quaternary structure, found in a complex with DyP, suggesting it is the native cargo protein. Monomers form pentamers, which assemble to form hollow shells composed of 60 subunits with several openings.

It localises to the encapsulin nanocompartment. The protein localises to the cell membrane. Its function is as follows. Shell component of a type 1 encapsulin nanocompartment. Assembles into proteinaceous shells 23-24 nm in diameter with 2-2.5 nm thick walls. Cargo protein DyP is targeted to the interior via its C-terminal extension; probably only 1 DyP hexamer is incorporated into each shell. Probably involved in protection against oxidative damage. The chain is Type 1 encapsulin shell protein from Mycolicibacterium paratuberculosis (strain ATCC BAA-968 / K-10) (Mycobacterium paratuberculosis).